A 290-amino-acid polypeptide reads, in one-letter code: Cbb3-type cytochrome c oxidase subunit CcoP (290 aa).

Residues 1-22 (MSVKPTKQKPGEPPTTGHSWDG) are disordered. At 1–37 (MSVKPTKQKPGEPPTTGHSWDGIEEFDNPMPRWWLWT) the chain is on the cytoplasmic side. The helical transmembrane segment at 38–58 (FYVTIVWAIGYSILYPAWPLI) threads the bilayer. At 59–290 (NGATNGLIGH…VYVHGLGGGE (232 aa)) the chain is on the periplasmic side. Cytochrome c domains follow at residues 109-199 (YATN…LQIS) and 206-287 (ALSA…HGLG). Residues Cys-122, Cys-125, His-126, Met-174, Cys-219, Cys-222, His-223, and Met-264 each contribute to the heme c site.

The protein belongs to the CcoP / FixP family. Component of the cbb3-type cytochrome c oxidase at least composed of CcoN, CcoO, CcoQ and CcoP. It depends on heme c as a cofactor.

It localises to the cell inner membrane. Its pathway is energy metabolism; oxidative phosphorylation. In terms of biological role, C-type cytochrome. Part of the cbb3-type cytochrome c oxidase complex. CcoP subunit is required for transferring electrons from donor cytochrome c via its heme groups to CcoO subunit. From there, electrons are shuttled to the catalytic binuclear center of CcoN subunit where oxygen reduction takes place. The complex also functions as a proton pump. The sequence is that of Cbb3-type cytochrome c oxidase subunit CcoP from Cereibacter sphaeroides (strain ATCC 17023 / DSM 158 / JCM 6121 / CCUG 31486 / LMG 2827 / NBRC 12203 / NCIMB 8253 / ATH 2.4.1.) (Rhodobacter sphaeroides).